The primary structure comprises 195 residues: Probable DNA-directed RNA polymerase subunit delta (195 aa).

The HTH HARE-type domain maps to 14–81; it reads LSMIEVAHAI…GDNTWGLRAW (68 aa). A disordered region spans residues 91–195; the sequence is TVGETEDEED…DEEDKEDDEE (105 aa). Composition is skewed to acidic residues over residues 116–171 and 179–195; these read TDDD…EDQL and FGDD…DDEE.

Belongs to the RpoE family. As to quaternary structure, RNAP is composed of a core of 2 alpha, a beta and a beta' subunits. The core is associated with a delta subunit and one of several sigma factors.

Its function is as follows. Participates in both the initiation and recycling phases of transcription. In the presence of the delta subunit, RNAP displays an increased specificity of transcription, a decreased affinity for nucleic acids, and an increased efficiency of RNA synthesis because of enhanced recycling. The polypeptide is Probable DNA-directed RNA polymerase subunit delta (Limosilactobacillus fermentum (strain NBRC 3956 / LMG 18251) (Lactobacillus fermentum)).